A 299-amino-acid polypeptide reads, in one-letter code: Circadian clock oscillator protein KaiA (299 aa).

The tract at residues 9–148 (SRPQIFICTL…LQLSKACRLP (140 aa)) is psR domain, binds oxidized quinones. Positions 9 to 179 (SRPQIFICTL…RLSQKLKERL (171 aa)) constitute a KaiA N-terminal domain. The tract at residues 180–188 (GYLGVYYKR) is flexible linker. The KaiA C-terminal domain occupies 189–297 (NPQQFFHKLT…CEMYRRSIPK (109 aa)).

Homodimer. The KaiABC complex composition changes during the circadian cycle to control KaiC phosphorylation. Complexes KaiC(6), KaiA(2-4):KaiC(6), KaiB(6):KaiC(6) and KaiC(6):KaiB(6):KaiA(12) are among the most important forms, many form cooperatively. KaiA and CikA bind to the same region of the KaiB(fs) form and therefore compete.

In terms of biological role, key component of the KaiABC oscillator complex, which constitutes the main circadian regulator in cyanobacteria. Complex composition changes during the circadian cycle to control KaiC phosphorylation. KaiA stimulates KaiC autophosphorylation, while KaiB sequesters KaiA, leading to KaiC autodephosphorylation. KaiA binding to the KaiC CII domain during the subjective day yields KaiA(2-4):KaiC(6) complexes which stimulate KaiC autophosphorylation. Phospho-Ser-431 KaiC accumulation triggers binding of KaiB during the subjective night to form the KaiB(6):KaiC(6) complex, leading to changes in the output regulators CikA and SasA. KaiB(6):KaiC(6) formation exposes a site for KaiA binding on KaiB that sequesters KaiA from KaiC's CII domain, making the KaiC(6):KaiB(6):KaiA(12) complex resulting in KaiC autodephosphorylation. Complete dephosphorylation of KaiC leads to dissociation of KaiA(2):KaiB(1), completing 1 cycle of the Kai oscillator. Functionally, binds oxidized quinones via the N-terminal PsR domain, allowing it to sense redox changes and possibly mediate clock input. The sequence is that of Circadian clock oscillator protein KaiA from Acaryochloris marina (strain MBIC 11017).